Reading from the N-terminus, the 403-residue chain is Tryptophan synthase beta chain (403 aa).

At K93 the chain carries N6-(pyridoxal phosphate)lysine.

It belongs to the TrpB family. Tetramer of two alpha and two beta chains. Pyridoxal 5'-phosphate serves as cofactor.

It carries out the reaction (1S,2R)-1-C-(indol-3-yl)glycerol 3-phosphate + L-serine = D-glyceraldehyde 3-phosphate + L-tryptophan + H2O. The protein operates within amino-acid biosynthesis; L-tryptophan biosynthesis; L-tryptophan from chorismate: step 5/5. Functionally, the beta subunit is responsible for the synthesis of L-tryptophan from indole and L-serine. This chain is Tryptophan synthase beta chain, found in Acinetobacter baylyi (strain ATCC 33305 / BD413 / ADP1).